Consider the following 141-residue polypeptide: Putative nickel-responsive regulator (141 aa).

Positions 83, 94, 96, and 102 each coordinate Ni(2+).

This sequence belongs to the transcriptional regulatory CopG/NikR family. It depends on Ni(2+) as a cofactor.

Transcriptional regulator. The sequence is that of Putative nickel-responsive regulator from Methanopyrus kandleri (strain AV19 / DSM 6324 / JCM 9639 / NBRC 100938).